A 511-amino-acid polypeptide reads, in one-letter code: Maturase K (511 aa).

It belongs to the intron maturase 2 family. MatK subfamily.

It is found in the plastid. The protein localises to the chloroplast. Functionally, usually encoded in the trnK tRNA gene intron. Probably assists in splicing its own and other chloroplast group II introns. The polypeptide is Maturase K (Brachypodium sylvaticum (False brome)).